We begin with the raw amino-acid sequence, 552 residues long: Putative pentatricopeptide repeat-containing protein At1g64310 (552 aa).

PPR repeat units follow at residues 39–69 (DPYF…FPER), 70–104 (SVFL…DTRP), 105–139 (DNFT…GLGF), 140–170 (DQIC…IPDP), 171–205 (DLAL…GHQP), 206–240 (NCYT…NLDS), 241–271 (HSYV…ISEP), 272–306 (DLVA…GKKP), 307–341 (DCVL…GLEL), 342–372 (DIKV…IPEK), 373–407 (NIVS…GLIP), 408–438 (DEIT…MKSE), and 444–474 (QTEH…LQKP). The segment at 479 to 552 (ILGALLSCCE…GGKLPGISWF (74 aa)) is type E motif; degenerate.

This sequence belongs to the PPR family. PCMP-E subfamily.

The chain is Putative pentatricopeptide repeat-containing protein At1g64310 (PCMP-E65) from Arabidopsis thaliana (Mouse-ear cress).